The following is a 195-amino-acid chain: 3-isopropylmalate dehydratase small subunit (195 aa).

It belongs to the LeuD family. LeuD type 1 subfamily. Heterodimer of LeuC and LeuD.

It catalyses the reaction (2R,3S)-3-isopropylmalate = (2S)-2-isopropylmalate. It participates in amino-acid biosynthesis; L-leucine biosynthesis; L-leucine from 3-methyl-2-oxobutanoate: step 2/4. Catalyzes the isomerization between 2-isopropylmalate and 3-isopropylmalate, via the formation of 2-isopropylmaleate. This is 3-isopropylmalate dehydratase small subunit from Salinispora arenicola (strain CNS-205).